The following is a 136-amino-acid chain: uncharacterized protein (136 aa).

Residues 1-100 (MQSREPSGWR…PCSGGPDRPE (100 aa)) are disordered. Over residues 66-75 (RLLRWHHRVP) the composition is skewed to basic residues.

This is an uncharacterized protein from Homo sapiens (Human).